Consider the following 291-residue polypeptide: Probable L-ascorbate peroxidase 3, peroxisomal (291 aa).

Catalysis depends on histidine 41, which acts as the Proton acceptor. The disordered stretch occupies residues 114 to 133; sequence YVPGRRDSSDSPEEGRLPDA. Over residues 116-133 the composition is skewed to basic and acidic residues; that stretch reads PGRRDSSDSPEEGRLPDA. Histidine 161 is a heme b binding site. Residues threonine 162, threonine 178, and aspartate 185 each contribute to the K(+) site. A helical membrane pass occupies residues 263–283; that stretch reads LLMQTAAGVAVAAAVVAWAYL.

This sequence belongs to the peroxidase family. Ascorbate peroxidase subfamily. It depends on heme b as a cofactor. Expressed in stems.

The protein resides in the peroxisome membrane. It carries out the reaction L-ascorbate + H2O2 = L-dehydroascorbate + 2 H2O. Plays a key role in hydrogen peroxide removal. The sequence is that of Probable L-ascorbate peroxidase 3, peroxisomal from Oryza sativa subsp. japonica (Rice).